We begin with the raw amino-acid sequence, 1706 residues long: Histone acetyltransferase HAC12 (1706 aa).

Disordered stretches follow at residues 1-33, 251-284, 397-456, and 524-543; these read MNVQ…MQNL, TNNN…NSHM, VSRV…LGKT, and QNSQ…SDSS. The segment covering 397–406 has biased composition (polar residues); that stretch reads VSRVNSSLSH. Positions 407 to 434 are enriched in low complexity; it reads QQQFQQPPNRFQQQPNQIQQQQQQFLNQ. The TAZ-type 1 zinc finger occupies 637–716; that stretch reads HDPKFKNQQR…DPRCPVCVPV (80 aa). The tract at residues 791–909 is disordered; the sequence is TESCKSSIVS…PELTSKSRKP (119 aa). The span at 794–805 shows a compositional bias: polar residues; the sequence is CKSSIVSTTEAD. 2 stretches are compositionally biased toward basic and acidic residues: residues 809 to 829 and 870 to 896; these read DAER…KVEI and PKQE…KEEL. Residues 998–1075 form a PHD-type zinc finger; that stretch reads HYFCIPCYNE…EYTCPYCYVI (78 aa). In terms of domain architecture, CBP/p300-type HAT spans 1090–1526; the sequence is VLGAKDLPRT…VLYHLHNPTA (437 aa). Residues 1213–1215, 1232–1233, and Trp1288 contribute to the acetyl-CoA site; these read LDS and RT. ZZ-type zinc fingers lie at residues 1408-1471 and 1528-1581; these read HLQH…IADI and AFVT…SLAD. Residues Cys1413, Cys1416, Cys1428, Cys1431, Cys1437, Cys1440, His1453, His1461, Cys1533, Cys1536, Cys1548, Cys1551, Cys1557, Cys1560, His1569, and His1571 each coordinate Zn(2+). Residues 1588–1671 form a TAZ-type 2 zinc finger; it reads EARQLRVLQL…ECDVPRCGDL (84 aa).

The protein resides in the nucleus. It catalyses the reaction L-lysyl-[protein] + acetyl-CoA = N(6)-acetyl-L-lysyl-[protein] + CoA + H(+). In terms of biological role, acetyltransferase enzyme. Acetylates histones, giving a specific tag for transcriptional activation. In Arabidopsis thaliana (Mouse-ear cress), this protein is Histone acetyltransferase HAC12 (HAC12).